The following is a 249-amino-acid chain: 5'-nucleotidase SurE (249 aa).

A divalent metal cation contacts are provided by aspartate 8, aspartate 9, serine 39, and asparagine 96.

This sequence belongs to the SurE nucleotidase family. Requires a divalent metal cation as cofactor.

The protein resides in the cytoplasm. It catalyses the reaction a ribonucleoside 5'-phosphate + H2O = a ribonucleoside + phosphate. Nucleotidase that shows phosphatase activity on nucleoside 5'-monophosphates. The protein is 5'-nucleotidase SurE of Clostridium tetani (strain Massachusetts / E88).